The chain runs to 168 residues: Prolyl-tRNA synthetase associated domain-containing protein 1 (168 aa).

The protein belongs to the PRORSD1 family.

The chain is Prolyl-tRNA synthetase associated domain-containing protein 1 (prorsd1p) from Xenopus laevis (African clawed frog).